We begin with the raw amino-acid sequence, 903 residues long: HTH-type transcriptional regulator MalT (903 aa).

39-46 (CPAGYGKT) provides a ligand contact to ATP. The HTH luxR-type domain occupies 832 to 897 (ELIRTSPLTQ…DAVQQAQRLL (66 aa)). A DNA-binding region (H-T-H motif) is located at residues 856 to 875 (NDQIAGELEVAATTIKTHIR).

Belongs to the MalT family. As to quaternary structure, monomer in solution. Oligomerizes to an active state in the presence of the positive effectors ATP and maltotriose.

With respect to regulation, activated by ATP and maltotriose, which are both required for DNA binding. In terms of biological role, positively regulates the transcription of the maltose regulon whose gene products are responsible for uptake and catabolism of malto-oligosaccharides. Specifically binds to the promoter region of its target genes, recognizing a short DNA motif called the MalT box. This chain is HTH-type transcriptional regulator MalT, found in Yersinia enterocolitica serotype O:8 / biotype 1B (strain NCTC 13174 / 8081).